Consider the following 135-residue polypeptide: ATP synthase epsilon chain (135 aa).

It belongs to the ATPase epsilon chain family. F-type ATPases have 2 components, CF(1) - the catalytic core - and CF(0) - the membrane proton channel. CF(1) has five subunits: alpha(3), beta(3), gamma(1), delta(1), epsilon(1). CF(0) has three main subunits: a, b and c.

It is found in the cell inner membrane. Functionally, produces ATP from ADP in the presence of a proton gradient across the membrane. This chain is ATP synthase epsilon chain, found in Hyphomonas neptunium (strain ATCC 15444).